A 431-amino-acid polypeptide reads, in one-letter code: Serine--tRNA ligase (431 aa).

An L-serine-binding site is contributed by 236–238 (TAE). 267–269 (RSE) is a binding site for ATP. Glu-290 is an L-serine binding site. ATP is bound at residue 354–357 (EISS). Residue Ser-389 coordinates L-serine.

Belongs to the class-II aminoacyl-tRNA synthetase family. Type-1 seryl-tRNA synthetase subfamily. As to quaternary structure, homodimer. The tRNA molecule binds across the dimer.

It is found in the cytoplasm. It catalyses the reaction tRNA(Ser) + L-serine + ATP = L-seryl-tRNA(Ser) + AMP + diphosphate + H(+). The enzyme catalyses tRNA(Sec) + L-serine + ATP = L-seryl-tRNA(Sec) + AMP + diphosphate + H(+). Its pathway is aminoacyl-tRNA biosynthesis; selenocysteinyl-tRNA(Sec) biosynthesis; L-seryl-tRNA(Sec) from L-serine and tRNA(Sec): step 1/1. In terms of biological role, catalyzes the attachment of serine to tRNA(Ser). Is also able to aminoacylate tRNA(Sec) with serine, to form the misacylated tRNA L-seryl-tRNA(Sec), which will be further converted into selenocysteinyl-tRNA(Sec). The protein is Serine--tRNA ligase of Herminiimonas arsenicoxydans.